The chain runs to 399 residues: Protein HYM1 (399 aa).

Low complexity predominate over residues 363–382 (VSNNNASSSNVASITSPSSV). A disordered region spans residues 363–399 (VSNNNASSSNVASITSPSSVMNNQSSILTHSTSPDSR). Residues 383 to 399 (MNNQSSILTHSTSPDSR) show a composition bias toward polar residues.

Belongs to the Mo25 family.

This is Protein HYM1 (HYM1) from Saccharomyces cerevisiae (strain ATCC 204508 / S288c) (Baker's yeast).